Consider the following 853-residue polypeptide: DNA mismatch repair protein MutS (853 aa).

Residue 614–621 (GPNMGGKS) coordinates ATP.

This sequence belongs to the DNA mismatch repair MutS family.

This protein is involved in the repair of mismatches in DNA. It is possible that it carries out the mismatch recognition step. This protein has a weak ATPase activity. This chain is DNA mismatch repair protein MutS, found in Escherichia coli O127:H6 (strain E2348/69 / EPEC).